The following is a 308-amino-acid chain: HTH-type transcriptional regulator YtlI (308 aa).

One can recognise an HTH lysR-type domain in the interval 1 to 57 (MELRSIKTFHTIVKFGSFYKAAEILNYSQPTISMRMKQLEQDLGVLLFERGKSLQLT). Positions 18–37 (FYKAAEILNYSQPTISMRMK) form a DNA-binding region, H-T-H motif.

The protein belongs to the LysR transcriptional regulatory family.

In terms of biological role, positively regulates the expression of ytmI operon in response to the availability of sulfur sources. The polypeptide is HTH-type transcriptional regulator YtlI (ytlI) (Bacillus subtilis (strain 168)).